Here is a 271-residue protein sequence, read N- to C-terminus: uncharacterized protein (271 aa).

This is an uncharacterized protein from Saccharomyces cerevisiae (strain ATCC 204508 / S288c) (Baker's yeast).